A 273-amino-acid polypeptide reads, in one-letter code: Dermonecrotic toxin LhSicTox-alphaIA1ii (273 aa).

Residue His-5 is part of the active site. The Mg(2+) site is built by Glu-25 and Asp-27. His-41 serves as the catalytic Nucleophile. 2 disulfide bridges follow: Cys-45–Cys-51 and Cys-47–Cys-190. Asp-85 serves as a coordination point for Mg(2+).

Belongs to the arthropod phospholipase D family. Class II subfamily. Mg(2+) serves as cofactor. Expressed by the venom gland.

Its subcellular location is the secreted. It carries out the reaction an N-(acyl)-sphingosylphosphocholine = an N-(acyl)-sphingosyl-1,3-cyclic phosphate + choline. It catalyses the reaction an N-(acyl)-sphingosylphosphoethanolamine = an N-(acyl)-sphingosyl-1,3-cyclic phosphate + ethanolamine. The enzyme catalyses a 1-acyl-sn-glycero-3-phosphocholine = a 1-acyl-sn-glycero-2,3-cyclic phosphate + choline. The catalysed reaction is a 1-acyl-sn-glycero-3-phosphoethanolamine = a 1-acyl-sn-glycero-2,3-cyclic phosphate + ethanolamine. Dermonecrotic toxins cleave the phosphodiester linkage between the phosphate and headgroup of certain phospholipids (sphingolipid and lysolipid substrates), forming an alcohol (often choline) and a cyclic phosphate. This toxin acts on sphingomyelin (SM). It may also act on ceramide phosphoethanolamine (CPE), lysophosphatidylcholine (LPC) and lysophosphatidylethanolamine (LPE), but not on lysophosphatidylserine (LPS), and lysophosphatidylglycerol (LPG). It acts by transphosphatidylation, releasing exclusively cyclic phosphate products as second products. Induces dermonecrosis, hemolysis, increased vascular permeability, edema, inflammatory response, and platelet aggregation. In Loxosceles hirsuta (Recluse spider), this protein is Dermonecrotic toxin LhSicTox-alphaIA1ii.